Consider the following 242-residue polypeptide: Uridylate kinase (242 aa).

Residue 11-14 participates in ATP binding; the sequence is KLSG. Residues 19 to 24 form an involved in allosteric activation by GTP region; the sequence is GNMGYG. A UMP-binding site is contributed by Gly53. Residues Gly54 and Arg58 each coordinate ATP. UMP contacts are provided by residues Asp73 and 134-141; that span reads SGNPFFTT. ATP-binding residues include Thr161, Tyr167, and Asp170.

Belongs to the UMP kinase family. As to quaternary structure, homohexamer.

The protein localises to the cytoplasm. The catalysed reaction is UMP + ATP = UDP + ADP. Its pathway is pyrimidine metabolism; CTP biosynthesis via de novo pathway; UDP from UMP (UMPK route): step 1/1. Allosterically activated by GTP. Inhibited by UTP. Catalyzes the reversible phosphorylation of UMP to UDP. In Nostoc sp. (strain PCC 7120 / SAG 25.82 / UTEX 2576), this protein is Uridylate kinase.